The primary structure comprises 195 residues: uncharacterized protein (195 aa).

Residues 24–141 (NTDENLKLIF…VFLADKISWD (118 aa)) form the HD domain.

This is an uncharacterized protein from Lactococcus lactis subsp. cremoris (Streptococcus cremoris).